The chain runs to 89 residues: Large ribosomal subunit protein bL27 (89 aa).

This sequence belongs to the bacterial ribosomal protein bL27 family.

This chain is Large ribosomal subunit protein bL27, found in Afipia carboxidovorans (strain ATCC 49405 / DSM 1227 / KCTC 32145 / OM5) (Oligotropha carboxidovorans).